Here is a 638-residue protein sequence, read N- to C-terminus: 1-deoxy-D-xylulose-5-phosphate synthase (638 aa).

Thiamine diphosphate is bound by residues His71 and 112-114 (SHA). A Mg(2+)-binding site is contributed by Asp144. Thiamine diphosphate contacts are provided by residues 145–146 (GA), Asn173, Tyr284, and Glu365. Mg(2+) is bound at residue Asn173.

Belongs to the transketolase family. DXPS subfamily. In terms of assembly, homodimer. Requires Mg(2+) as cofactor. It depends on thiamine diphosphate as a cofactor.

It carries out the reaction D-glyceraldehyde 3-phosphate + pyruvate + H(+) = 1-deoxy-D-xylulose 5-phosphate + CO2. It participates in metabolic intermediate biosynthesis; 1-deoxy-D-xylulose 5-phosphate biosynthesis; 1-deoxy-D-xylulose 5-phosphate from D-glyceraldehyde 3-phosphate and pyruvate: step 1/1. Functionally, catalyzes the acyloin condensation reaction between C atoms 2 and 3 of pyruvate and glyceraldehyde 3-phosphate to yield 1-deoxy-D-xylulose-5-phosphate (DXP). In Mycobacterium bovis (strain ATCC BAA-935 / AF2122/97), this protein is 1-deoxy-D-xylulose-5-phosphate synthase.